The chain runs to 884 residues: Probable ribonuclease ZC3H12C (884 aa).

Residues 66–108 (KPTMDTVNSGKEGKGVSEENVSSGDSEGSTSSDHESEQLSSLS) are disordered. Residues 87 to 96 (SSGDSEGSTS) are compositionally biased toward low complexity. A Phosphoserine modification is found at S231. The 156-residue stretch at 246-401 (LRPVVIDGSN…LGRHGPSLDN (156 aa)) folds into the RNase NYN domain. The segment at 411 to 436 (EHKKQPCPYGKKCTYGHKCKYYHPER) adopts a C3H1-type zinc-finger fold. Residues 456-478 (AAKTTNEGGLVKSNSVPCSTKAD) show a composition bias toward polar residues. 3 disordered regions span residues 456 to 548 (AAKT…SGVH), 716 to 739 (VGAR…KAPH), and 755 to 776 (SRLY…EGLG). Residues 500–516 (VYQDIEEKLPTKNKLET) are compositionally biased toward basic and acidic residues. The segment covering 518–543 (SVPSLVSIPATSTAKPQSTTPLSNGL) has biased composition (polar residues).

This sequence belongs to the ZC3H12 family. Mg(2+) is required as a cofactor.

In terms of biological role, may function as RNase and regulate the levels of target RNA species. In Mus musculus (Mouse), this protein is Probable ribonuclease ZC3H12C (Zc3h12c).